A 386-amino-acid polypeptide reads, in one-letter code: S-adenosylmethionine synthase (386 aa).

An ATP-binding site is contributed by H16. D18 provides a ligand contact to Mg(2+). Residue E44 coordinates K(+). Positions 57 and 100 each coordinate L-methionine. Positions 100 to 110 are flexible loop; the sequence is QSRDIAQGVDR. ATP is bound by residues 165–167, D240, 246–247, A263, and K267; these read DAK and RK. D240 is an L-methionine binding site. Residue K271 participates in L-methionine binding.

Belongs to the AdoMet synthase family. In terms of assembly, homotetramer; dimer of dimers. Mg(2+) is required as a cofactor. The cofactor is K(+).

It localises to the cytoplasm. The catalysed reaction is L-methionine + ATP + H2O = S-adenosyl-L-methionine + phosphate + diphosphate. It functions in the pathway amino-acid biosynthesis; S-adenosyl-L-methionine biosynthesis; S-adenosyl-L-methionine from L-methionine: step 1/1. Catalyzes the formation of S-adenosylmethionine (AdoMet) from methionine and ATP. The overall synthetic reaction is composed of two sequential steps, AdoMet formation and the subsequent tripolyphosphate hydrolysis which occurs prior to release of AdoMet from the enzyme. This chain is S-adenosylmethionine synthase, found in Francisella tularensis subsp. holarctica (strain FTNF002-00 / FTA).